The sequence spans 380 residues: MVIVTTFHIDAARDRIINCVKDVRNIVTNQVVPATRKLGSIETTLENFRTETIGGFTTISDCVSLLRNLRSETTRNFNTLLSRTAEPTGQAQTQLRQGFDEPDGHKSEQRTFFSNLDTALNATQALLNHVPPARYTLPPAPLPVNESFGQLHALHLNTLEWLTHINHNLDSMLNMLNPANLMSQGTPLSRLKDAVRTLTQNMNTIQSDQQKILASTSATNHSDILRKLESLDTGLKQLGIRLDVVVSSLNNMSERPPTPSHDTASSSTSTDPNPLPPYQAVHPSLFCRTYGNILYNGIDSRIPMDVTGRPASTSLKLTITVECSEQNTRVNFTLLDDGYILLSDSIETKHKLQHIPSDCLSLIHARCPKFVYKFRGEGLC.

The interval 251–275 (NMSERPPTPSHDTASSSTSTDPNPL) is disordered. Low complexity predominate over residues 260–272 (SHDTASSSTSTDP).

This is an uncharacterized protein from Allium cepa var. aggregatum (Shallot).